Reading from the N-terminus, the 441-residue chain is Amino-acid acetyltransferase (441 aa).

The 140-residue stretch at 295-434 folds into the N-acetyltransferase domain; the sequence is EQVRRATIND…QELYNYQRRS (140 aa).

The protein belongs to the acetyltransferase family. ArgA subfamily. As to quaternary structure, homohexamer.

The protein localises to the cytoplasm. The catalysed reaction is L-glutamate + acetyl-CoA = N-acetyl-L-glutamate + CoA + H(+). The protein operates within amino-acid biosynthesis; L-arginine biosynthesis; N(2)-acetyl-L-ornithine from L-glutamate: step 1/4. This Yersinia pseudotuberculosis serotype O:1b (strain IP 31758) protein is Amino-acid acetyltransferase.